A 740-amino-acid polypeptide reads, in one-letter code: Elongation factor 2 (740 aa).

The region spanning 23–264 is the tr-type G domain; the sequence is AQIRNAGTLA…MIIEHVPPPN (242 aa). Residues 32–39, 98–102, and 152–155 each bind GTP; these read AHVDHGKT, DTPGH, and NKID. His-605 bears the Diphthamide mark.

Belongs to the TRAFAC class translation factor GTPase superfamily. Classic translation factor GTPase family. EF-G/EF-2 subfamily.

The protein localises to the cytoplasm. Functionally, catalyzes the GTP-dependent ribosomal translocation step during translation elongation. During this step, the ribosome changes from the pre-translocational (PRE) to the post-translocational (POST) state as the newly formed A-site-bound peptidyl-tRNA and P-site-bound deacylated tRNA move to the P and E sites, respectively. Catalyzes the coordinated movement of the two tRNA molecules, the mRNA and conformational changes in the ribosome. In Pyrobaculum islandicum (strain DSM 4184 / JCM 9189 / GEO3), this protein is Elongation factor 2.